A 325-amino-acid polypeptide reads, in one-letter code: Phospho-N-acetylmuramoyl-pentapeptide-transferase (325 aa).

10 consecutive transmembrane segments (helical) span residues 5–25 (VLLL…PIFI), 57–77 (LMIL…LSIF), 81–101 (VLLL…DDFI), 117–137 (LIGQ…MGLS), 146–166 (SLSI…LVGA), 178–198 (GLVA…AWAT), 200–220 (YFEV…FLVF), 227–247 (VFMG…IAIM), 252–272 (ILLI…IIQV), and 304–324 (VTFW…EVWI).

The protein belongs to the glycosyltransferase 4 family. MraY subfamily. Requires Mg(2+) as cofactor.

It localises to the cell membrane. It carries out the reaction UDP-N-acetyl-alpha-D-muramoyl-L-alanyl-gamma-D-glutamyl-meso-2,6-diaminopimeloyl-D-alanyl-D-alanine + di-trans,octa-cis-undecaprenyl phosphate = di-trans,octa-cis-undecaprenyl diphospho-N-acetyl-alpha-D-muramoyl-L-alanyl-D-glutamyl-meso-2,6-diaminopimeloyl-D-alanyl-D-alanine + UMP. Its pathway is cell wall biogenesis; peptidoglycan biosynthesis. Its function is as follows. Catalyzes the initial step of the lipid cycle reactions in the biosynthesis of the cell wall peptidoglycan: transfers peptidoglycan precursor phospho-MurNAc-pentapeptide from UDP-MurNAc-pentapeptide onto the lipid carrier undecaprenyl phosphate, yielding undecaprenyl-pyrophosphoryl-MurNAc-pentapeptide, known as lipid I. This Halalkalibacterium halodurans (strain ATCC BAA-125 / DSM 18197 / FERM 7344 / JCM 9153 / C-125) (Bacillus halodurans) protein is Phospho-N-acetylmuramoyl-pentapeptide-transferase.